Consider the following 278-residue polypeptide: Shikimate dehydrogenase (NADP(+)) (278 aa).

Shikimate is bound by residues 19-21 (SRS) and T66. The active-site Proton acceptor is K70. Shikimate is bound by residues N91 and D106. Residues 129–133 (GAGGA) and F221 contribute to the NADP(+) site. Y223 serves as a coordination point for shikimate. Residue G242 coordinates NADP(+).

This sequence belongs to the shikimate dehydrogenase family. Homodimer.

It carries out the reaction shikimate + NADP(+) = 3-dehydroshikimate + NADPH + H(+). Its pathway is metabolic intermediate biosynthesis; chorismate biosynthesis; chorismate from D-erythrose 4-phosphate and phosphoenolpyruvate: step 4/7. Its function is as follows. Involved in the biosynthesis of the chorismate, which leads to the biosynthesis of aromatic amino acids. Catalyzes the reversible NADPH linked reduction of 3-dehydroshikimate (DHSA) to yield shikimate (SA). The sequence is that of Shikimate dehydrogenase (NADP(+)) from Anaeromyxobacter dehalogenans (strain 2CP-C).